Reading from the N-terminus, the 132-residue chain is Holo-[acyl-carrier-protein] synthase (132 aa).

Mg(2+) is bound by residues aspartate 13 and glutamate 63.

It belongs to the P-Pant transferase superfamily. AcpS family. The cofactor is Mg(2+).

The protein resides in the cytoplasm. It carries out the reaction apo-[ACP] + CoA = holo-[ACP] + adenosine 3',5'-bisphosphate + H(+). In terms of biological role, transfers the 4'-phosphopantetheine moiety from coenzyme A to a Ser of acyl-carrier-protein. The chain is Holo-[acyl-carrier-protein] synthase from Gloeobacter violaceus (strain ATCC 29082 / PCC 7421).